The following is a 234-amino-acid chain: Rhodanese-like domain-containing protein 9, chloroplastic (234 aa).

Residues 1-47 constitute a chloroplast transit peptide; that stretch reads MAGIISPSPTALYFTSNVGGRRLKAVSWAGKSVSGNVIRRRSLRIAA. One can recognise a Rhodanese domain in the interval 62-185; sequence AEEGYSVVDV…VKPGTFESVG (124 aa). Cys145 acts as the Cysteine persulfide intermediate in catalysis. Residues 204 to 222 form a helical membrane-spanning segment; it reads ISAVLGTVLVCAYLFIQFF.

The protein localises to the plastid. The protein resides in the chloroplast. Its subcellular location is the membrane. The chain is Rhodanese-like domain-containing protein 9, chloroplastic (STR9) from Arabidopsis thaliana (Mouse-ear cress).